The chain runs to 379 residues: Tubulin--tyrosine ligase (379 aa).

One can recognise a TTL domain in the interval T3–Q370.

This sequence belongs to the tubulin--tyrosine ligase family. In terms of assembly, monomer. The cofactor is Mg(2+). Requires K(+) as cofactor.

The enzyme catalyses C-terminal L-alpha-aminoacyl-L-glutamyl-L-glutamyl-[tubulin] + L-tyrosine + ATP = C-terminal L-alpha-aminoacyl-L-glutamyl-L-glutamyl-L-tyrosyl-[tubulin] + ADP + phosphate + H(+). In terms of biological role, catalyzes the post-translational addition of a tyrosine to the C-terminal end of detyrosinated alpha-tubulin. This chain is Tubulin--tyrosine ligase (TTL), found in Sus scrofa (Pig).